A 161-amino-acid chain; its full sequence is Dihydrofolate reductase (161 aa).

Residues 2–161 (KISLISAISN…YNFCFEILSR (160 aa)) form the DHFR domain. 6–8 (ISA) is a substrate binding site. NADP(+) is bound by residues 7–8 (SA) and 15–20 (IGHNNK). Asp-28 lines the substrate pocket. 44–47 (GRLT) contributes to the NADP(+) binding site. Arg-59 lines the substrate pocket. Residues 64–66 (ISH) and 96–101 (IGGSKI) each bind NADP(+). Thr-115 is a substrate binding site.

The protein belongs to the dihydrofolate reductase family.

It carries out the reaction (6S)-5,6,7,8-tetrahydrofolate + NADP(+) = 7,8-dihydrofolate + NADPH + H(+). It participates in cofactor biosynthesis; tetrahydrofolate biosynthesis; 5,6,7,8-tetrahydrofolate from 7,8-dihydrofolate: step 1/1. Its function is as follows. Key enzyme in folate metabolism. Catalyzes an essential reaction for de novo glycine and purine synthesis, and for DNA precursor synthesis. The chain is Dihydrofolate reductase (folA) from Buchnera aphidicola subsp. Schizaphis graminum (strain Sg).